Here is a 24-residue protein sequence, read N- to C-terminus: Brevinin-1Ra (24 aa).

A disulfide bridge links C18 with C24.

Expressed by the skin glands.

It localises to the secreted. Functionally, antimicrobial peptide. The sequence is that of Brevinin-1Ra from Pelophylax ridibundus (Marsh frog).